We begin with the raw amino-acid sequence, 260 residues long: Protein FAM220A (260 aa).

Disordered regions lie at residues 1–75 (MKAG…SKAS) and 129–158 (GSDW…GRPG). The segment covering 35–47 (RNPSPSVVPSWTD) has biased composition (polar residues).

Interacts with transcriptional activator STAT3; the interaction occurs in both the nucleus and the cytoplasm, is enhanced by IL6 and promotes STAT3 dephosphorylation, leading to negative regulation of STAT3 transcriptional activator activity. Can interact with both unphosphorylated and phosphorylated STAT3 but interacts preferentially with phosphorylated STAT3 in the nucleus. Interacts with protein phosphatase PTPN2/TC45; this promotes interaction of PTPN2 with STAT3, leading to dephosphorylation of STAT3 by PTPN2. As to expression, expressed at high levels in the testis where it is detected within elongated spermatids during the late stages (steps 9-16) of haploid germ cell development and in the tubular lumen (at protein level).

It is found in the nucleus. Its subcellular location is the cytoplasm. The protein localises to the cytoplasmic vesicle. The protein resides in the secretory vesicle. It localises to the acrosome. Its function is as follows. Promotes dephosphorylation of transcriptional activator STAT3 by interacting with both STAT3 and protein phosphatase PTPN2. This promotes interaction of PTPN2 with STAT3 and mediates STAT3 dephosphorylation by PTPN2, leading to negative regulation of STAT3 transcriptional activator activity. May be required for spermiogenesis or sperm function. In Mus musculus (Mouse), this protein is Protein FAM220A.